The following is an 80-amino-acid chain: MVKNTINLQDIFLNQVRKEHIAVTIYLTNGFQLKGLVKGFDNFTVVLDTDGKQQLVYKHAISTISPMKSVNLIFNEQGKE.

Residues 10-70 (DIFLNQVRKE…ISTISPMKSV (61 aa)) enclose the Sm domain.

Belongs to the Hfq family. In terms of assembly, homohexamer.

Its function is as follows. RNA chaperone that binds small regulatory RNA (sRNAs) and mRNAs to facilitate mRNA translational regulation in response to envelope stress, environmental stress and changes in metabolite concentrations. Also binds with high specificity to tRNAs. The polypeptide is RNA-binding protein Hfq (Ruminiclostridium cellulolyticum (strain ATCC 35319 / DSM 5812 / JCM 6584 / H10) (Clostridium cellulolyticum)).